Reading from the N-terminus, the 248-residue chain is Murein peptide amidase A (248 aa).

The Peptidase M14 domain occupies 3 to 245 (RYYSNNQEIT…DAFIALLQHD (243 aa)). Residues histidine 60, glutamate 63, and histidine 168 each contribute to the Zn(2+) site. The active-site Proton donor/acceptor is glutamate 221.

Belongs to the peptidase M14 family. In terms of assembly, homodimer. The cofactor is Zn(2+).

It is found in the cytoplasm. It catalyses the reaction L-alanyl-gamma-D-glutamyl-meso-2,6-diaminopimelate + H2O = L-alanyl-D-glutamate + meso-2,6-diaminopimelate. Its pathway is cell wall degradation; peptidoglycan degradation. Its function is as follows. Involved in muropeptide degradation. Catalyzes the hydrolysis of the gamma-D-glutamyl-diaminopimelic acid (gamma-D-Glu-Dap) amide bond in the murein tripeptide L-alanyl-gamma-D-glutamyl-meso-diaminopimelic acid, leading to the formation of L-Ala-gamma-D-Glu and Dap. Has weak activity with L-Ala-gamma-D-Glu-L-Lys, MurNAc-tripeptide and gamma-D-Glu-meso-Dap. Cannot hydrolyze murein tetrapeptide. The chain is Murein peptide amidase A from Vibrio campbellii (strain ATCC BAA-1116).